Here is a 133-residue protein sequence, read N- to C-terminus: Norrin (133 aa).

A signal peptide spans 1-24 (MRKHVLAASFSMLSLLVIMGDTDS). 4 disulfides stabilise this stretch: C39–C96, C55–C110, C65–C126, and C69–C128. The CTCK domain occupies 39-132 (CMRHHYVDSI…ILSCHCEECN (94 aa)).

As to quaternary structure, homodimer; disulfide-linked. Component of a complex, at least composed of TSPAN12, FZD4, LRP5/6 and norrin (NDP). Binds FZD4 with high affinity. Interacts with LRP6 (via Beta-propellers 1 and 2). Expressed in the outer nuclear, inner nuclear and ganglion cell layers of the retina, and in fetal and adult brain.

It is found in the secreted. Functionally, activates the canonical Wnt signaling pathway through FZD4 and LRP5 coreceptor. Plays a central role in retinal vascularization by acting as a ligand for FZD4 that signals via stabilizing beta-catenin (CTNNB1) and activating LEF/TCF-mediated transcriptional programs. Acts in concert with TSPAN12 to activate FZD4 independently of the Wnt-dependent activation of FZD4, suggesting the existence of a Wnt-independent signaling that also promote accumulation the beta-catenin (CTNNB1). May be involved in a pathway that regulates neural cell differentiation and proliferation. Possible role in neuroectodermal cell-cell interaction. The sequence is that of Norrin (NDP) from Homo sapiens (Human).